The primary structure comprises 673 residues: Vasorin (673 aa).

Residues 1–24 form the signal peptide; sequence MHSRSCLPPLLLLLLVLLGSGVQG. Residues 25–53 form the LRRNT domain; sequence CPSGCQCNQPQTVFCTARQGTTVPRDVPP. Topologically, residues 25 to 576 are extracellular; the sequence is CPSGCQCNQP…VTQAREGNLP (552 aa). 10 LRR repeats span residues 54–75, 78–99, 102–123, 126–147, 150–170, 171–192, 194–215, 218–239, 241–265, and 266–288; these read DTVG…CFAG, GLQL…IFQP, NLSN…TFRG, RLER…AFDA, RLLE…LHLP, RLLL…ILDT, NVEA…LFGR, NLHD…IQGL, GLTR…AGLT, and ALQE…SSLF. Asn-102 and Asn-118 each carry an N-linked (GlcNAc...) asparagine glycan. N-linked (GlcNAc...) asparagine glycosylation occurs at Asn-274. One can recognise an LRRCT domain in the interval 299-352; sequence NPFNCLCPLSWFGPWVRENHVVLASPEETRCHFPPKNAGRLLLDLDYADFGCPV. Residues 369–389 are disordered; sequence PTLSTSSQAPTWPSLTEPTTQ. A compositionally biased stretch (polar residues) spans 370-389; that stretch reads TLSTSSQAPTWPSLTEPTTQ. Residues 406 to 443 enclose the EGF-like domain; that stretch reads QPQDCPASICLNGGSCRLGARHHWECLCPEGFIGLYCE. Intrachain disulfides connect Cys-410–Cys-421, Cys-415–Cys-431, and Cys-433–Cys-442. Positions 463 to 559 constitute a Fibronectin type-III domain; that stretch reads PLLPLSIEPV…ACGEANTSQA (97 aa). Residues Asn-501, Asn-529, and Asn-555 are each glycosylated (N-linked (GlcNAc...) asparagine). The helical transmembrane segment at 577 to 597 threads the bilayer; sequence LLIAPALAAVLLAVLAAAGAA. Topologically, residues 598–673 are cytoplasmic; it reads YCVRRARATS…QGVLPAKHYI (76 aa). A disordered region spans residues 608-648; that stretch reads TAQDKGQVGPGTGPLELEGVKAPLEPGSKATEGGGEALSGG.

As to quaternary structure, interacts with TGFB1, TGFB2 and TGFB3. N-glycosylated.

It is found in the membrane. In terms of biological role, may act as an inhibitor of TGF-beta signaling. In Mus musculus (Mouse), this protein is Vasorin (Vasn).